The following is a 116-amino-acid chain: UPF0342 protein LBA1592 (116 aa).

It belongs to the UPF0342 family.

The sequence is that of UPF0342 protein LBA1592 from Lactobacillus acidophilus (strain ATCC 700396 / NCK56 / N2 / NCFM).